Reading from the N-terminus, the 308-residue chain is D-alanine--D-alanine ligase (308 aa).

One can recognise an ATP-grasp domain in the interval 103–302 (KTVMKTAGVP…FDELVQWMVE (200 aa)). 130-184 (MEPPYVIKPVADGSSVGVYIITEQHQHPPQELFRDDWAYGDKLLVEKYVAGKELT) serves as a coordination point for ATP. Residues Asp-252, Glu-269, and Asn-271 each coordinate Mg(2+).

The protein belongs to the D-alanine--D-alanine ligase family. The cofactor is Mg(2+). It depends on Mn(2+) as a cofactor.

It localises to the cytoplasm. The catalysed reaction is 2 D-alanine + ATP = D-alanyl-D-alanine + ADP + phosphate + H(+). It participates in cell wall biogenesis; peptidoglycan biosynthesis. Functionally, cell wall formation. This is D-alanine--D-alanine ligase from Rhodopseudomonas palustris (strain BisA53).